Here is a 571-residue protein sequence, read N- to C-terminus: Wee1-like protein kinase 1-A (571 aa).

A disordered region spans residues 1-101 (MSLQPVPHRL…PDCPGTPPHK (101 aa)). Positions 81-98 (PASPPGPAASPPDCPGTP) are enriched in pro residues. The region spanning 224 to 494 (FHELEKIGSG…SMALVKHSVL (271 aa)) is the Protein kinase domain. ATP is bound by residues 230–238 (IGSGEFGSV) and Lys-253. Asp-351 acts as the Proton acceptor in catalysis. 2 residues coordinate Mg(2+): Asn-356 and Asp-388. Positions 500–539 (KNAEQLRIELNAEKFKNALLQKELKKAQIAKAAAEERALF) form a coiled coil.

The protein belongs to the protein kinase superfamily. Ser/Thr protein kinase family. WEE1 subfamily. In terms of tissue distribution, zygotically expressed. Expressed in regions of the embryo that are devoid of mitotic cells, such as the involuting mesoderm.

The protein resides in the nucleus. It catalyses the reaction L-tyrosyl-[protein] + ATP = O-phospho-L-tyrosyl-[protein] + ADP + H(+). In terms of biological role, acts as a zygotic negative regulator of entry into mitosis (G2 to M transition) by protecting the nucleus from cytoplasmically activated cyclin B1-complexed cdk1 before the onset of mitosis by mediating phosphorylation of cdk1 on 'Tyr-15'. Specifically phosphorylates and inactivates cyclin B1-complexed cdk1 reaching a maximum during G2 phase and a minimum as cells enter M phase. Phosphorylation of cyclin B1-cdk1 occurs exclusively on 'Tyr-15' and phosphorylation of monomeric cdk1 does not occur. Involved in convergent extension of the paraxial mesoderm during neurulation by inhibiting the cell cycle. This is Wee1-like protein kinase 1-A (wee1-a) from Xenopus laevis (African clawed frog).